The following is a 273-amino-acid chain: 2,3,4,5-tetrahydropyridine-2,6-dicarboxylate N-succinyltransferase (273 aa).

Residues arginine 104 and aspartate 141 each contribute to the substrate site.

The protein belongs to the transferase hexapeptide repeat family. As to quaternary structure, homotrimer.

It is found in the cytoplasm. It carries out the reaction (S)-2,3,4,5-tetrahydrodipicolinate + succinyl-CoA + H2O = (S)-2-succinylamino-6-oxoheptanedioate + CoA. The protein operates within amino-acid biosynthesis; L-lysine biosynthesis via DAP pathway; LL-2,6-diaminopimelate from (S)-tetrahydrodipicolinate (succinylase route): step 1/3. This chain is 2,3,4,5-tetrahydropyridine-2,6-dicarboxylate N-succinyltransferase, found in Nitrosomonas eutropha (strain DSM 101675 / C91 / Nm57).